Reading from the N-terminus, the 213-residue chain is CDP-diacylglycerol--inositol 3-phosphatidyltransferase (213 aa).

The Cytoplasmic segment spans residues 1 to 5 (MPEEN). A helical membrane pass occupies residues 6 to 26 (IFLFVPNLIGYARIVFAIISF). A topological domain (lumenal) is located at residue Tyr27. A helical transmembrane segment spans residues 28–48 (FMPCCPFTASSFYLLSGLLDA). Residues Asp47 and Asp50 each contribute to the Mg(2+) site. Residues 49–73 (FDGHAARALNQGTRFGAMLDMLTDR) are Cytoplasmic-facing. Residues Gly51, Arg55, and Thr61 each coordinate a CDP-1,2-diacyl-sn-glycerol. The Mg(2+) site is built by Asp68 and Asp72. Asp72 functions as the Proton acceptor in the catalytic mechanism. A helical transmembrane segment spans residues 74 to 94 (CATMCLLVNLALLYPRATLLF). Residue Gln95 is a topological domain, lumenal. The chain crosses the membrane as a helical span at residues 96–116 (LSMSLDVASHWLHLHSSVVRG). Residues 117–139 (SESHKMIDLSGNPVLRIYYTSRP) lie on the Cytoplasmic side of the membrane. A helical membrane pass occupies residues 140-160 (ALFTLCAGNELFYCLLYLFNF). Topologically, residues 161–174 (SEGPLVGSVGLFRM) are lumenal. The chain crosses the membrane as a helical span at residues 175 to 195 (GLWITAPIALLKSIISVIHLV). Residues 196–213 (TAARNMAALDAADRAKKK) lie on the Cytoplasmic side of the membrane.

It belongs to the CDP-alcohol phosphatidyltransferase class-I family. The cofactor is Mn(2+). Requires Mg(2+) as cofactor. In terms of tissue distribution, detected in liver (at protein level). Widely expressed. Highly expressed in the brain and kidney; lower levels in heart, spleen, lung, liver, skeletal muscle and testis.

The protein localises to the endoplasmic reticulum membrane. It is found in the cell membrane. It catalyses the reaction a CDP-1,2-diacyl-sn-glycerol + myo-inositol = a 1,2-diacyl-sn-glycero-3-phospho-(1D-myo-inositol) + CMP + H(+). In terms of biological role, catalyzes the biosynthesis of phosphatidylinositol (PtdIns) as well as PtdIns:inositol exchange reaction. May thus act to reduce an excessive cellular PtdIns content. The exchange activity is due to the reverse reaction of PtdIns synthase and is dependent on CMP, which is tightly bound to the enzyme. This is CDP-diacylglycerol--inositol 3-phosphatidyltransferase from Rattus norvegicus (Rat).